The sequence spans 103 residues: Protamine-3 (103 aa).

The disordered stretch occupies residues 1–103; the sequence is MGSRCAKLNT…QSPEPKRTPS (103 aa). Over residues 10–21 the composition is skewed to low complexity; the sequence is TGQSPGHSPGHS. The segment covering 50-66 has biased composition (acidic residues); it reads GEEEEEEEEEGEEEEKE. Residues 78–90 show a composition bias toward basic and acidic residues; sequence EPERQEEGHKDNA. Residue S95 is modified to Phosphoserine.

The protein belongs to the protamine P3 family.

The protein localises to the nucleus. It localises to the chromosome. In terms of biological role, protamines substitute for histones in the chromatin of sperm during the haploid phase of spermatogenesis. They compact sperm DNA into a highly condensed, stable and inactive complex. The polypeptide is Protamine-3 (PRM3) (Homo sapiens (Human)).